Reading from the N-terminus, the 1305-residue chain is Contactin-associated protein-like 5 (1305 aa).

The N-terminal stretch at 1–22 is a signal peptide; the sequence is MDSPALGAVALLLAGFWHLGLT. The F5/8 type C domain maps to 23 to 174; that stretch reads ATNYNCDGAL…IGLRVEVFGC (152 aa). Over 23-1236 the chain is Extracellular; the sequence is ATNYNCDGAL…PLTNAVRSDS (1214 aa). Laminin G-like domains follow at residues 180 to 360 and 367 to 544; these read IADF…TFSC and PITF…IDLC. 5 disulfides stabilise this stretch: C329–C360, C512–C544, C550–C561, C555–C570, and C572–C582. The 38-residue stretch at 546 to 583 folds into the EGF-like 1 domain; sequence IKDRCLPNYCEHGGKCSQSWTTFYCDCNDTSYMGATCH. The Fibrinogen C-terminal domain occupies 584–790; sequence NSIYEQSCEA…LHCYGDRQFW (207 aa). The region spanning 791-956 is the Laminin G-like 3 domain; sequence NAASFNTEAS…KMTPGVKPGC (166 aa). 5 disulfide bridges follow: C929/C956, C960/C973, C967/C982, C984/C994, and C1163/C1198. Residues 957–995 form the EGF-like 2 domain; it reads PGHCSSYGNLCHNGGKCVEKYNGYSCDCTSSAYEGPFCK. A Laminin G-like 4 domain is found at 1017–1198; it reads PVTKNASTSS…VKGSLTESSC (182 aa). A helical transmembrane segment spans residues 1237-1257; the sequence is AVIGGVIAVVIFIIFCIIAIM. The Cytoplasmic segment spans residues 1258–1305; the sequence is SRFLYQHKQAHRSSQTKEKEYPENLESSFKADIDLQNTVSECKREYFI.

This sequence belongs to the neurexin family. Expressed in brain.

The protein localises to the membrane. Its function is as follows. May play a role in the correct development and proper functioning of the peripheral and central nervous system and be involved in cell adhesion and intercellular communication. The sequence is that of Contactin-associated protein-like 5 (CNTNAP5) from Gallus gallus (Chicken).